Consider the following 349-residue polypeptide: Protein Wnt-7b (349 aa).

The first 24 residues, 1–24 (MHRNFRKWIFYVFLCFGVLYVKLG), serve as a signal peptide directing secretion. 5 disulfides stabilise this stretch: Cys-73–Cys-84, Cys-123–Cys-131, Cys-133–Cys-152, Cys-200–Cys-214, and Cys-202–Cys-209. N-linked (GlcNAc...) asparagine glycans are attached at residues Asn-83 and Asn-127. Ser-206 carries O-palmitoleoyl serine; by PORCN lipidation. The segment at 238–266 (VEVVRASRLRQPTFLRIKQLRSYQKPMET) is disordered linker. Cystine bridges form between Cys-278/Cys-309, Cys-294/Cys-304, Cys-308/Cys-348, Cys-324/Cys-339, Cys-326/Cys-336, and Cys-331/Cys-332. Residue Asn-295 is glycosylated (N-linked (GlcNAc...) asparagine).

Belongs to the Wnt family. Forms a soluble 1:1 complex with AFM; this prevents oligomerization and is required for prolonged biological activity. The complex with AFM may represent the physiological form in body fluids. Interacts with FZD1 and FZD10. Interacts with FZD4 (in vitro). Interacts with PORCN. Interacts with glypican GPC3. Interacts (via intrinsically disordered linker region) with RECK; interaction with RECK confers ligand selectivity for Wnt7 in brain endothelial cells and allows these cells to selectively respond to Wnt7. In terms of processing, palmitoleoylation is required for efficient binding to frizzled receptors. Depalmitoleoylation leads to Wnt signaling pathway inhibition.

It localises to the secreted. Its subcellular location is the extracellular space. It is found in the extracellular matrix. Functionally, ligand for members of the frizzled family of seven transmembrane receptors that functions in the canonical Wnt/beta-catenin signaling pathway. Required for normal fusion of the chorion and the allantois during placenta development. Required for central nervous system (CNS) angiogenesis and blood-brain barrier regulation. This Mus musculus (Mouse) protein is Protein Wnt-7b (Wnt7b).